A 720-amino-acid chain; its full sequence is Mitogen-activated protein kinase 6 (720 aa).

Met-1 participates in a covalent cross-link: Peptide (Met-Gly) (interchain with G-Cter in ubiquitin). A Protein kinase domain is found at 20 to 316; that stretch reads YMDLKPLGCG…AEEALSHPYM (297 aa). Residues 26 to 34 and Lys-49 each bind ATP; that span reads LGCGGNGLV. Asp-152 (proton acceptor) is an active-site residue. Ser-189 bears the Phosphoserine; by PAK1, PAK2 and PAK3 mark. An SEG motif motif is present at residues 189–191; that stretch reads SEG. The short motif at 332–337 is the FRIEDE motif element; that stretch reads FHIEDE. Phosphoserine occurs at positions 386, 554, and 556. A disordered region spans residues 638-657; it reads SEMLETEPVEEGKRGERGRE. A compositionally biased stretch (basic and acidic residues) spans 647–657; it reads EEGKRGERGRE. A Phosphoserine modification is found at Ser-683. A compositionally biased stretch (polar residues) spans 700–714; the sequence is AMKSSPQIPHKTYSS. The interval 700-720 is disordered; that stretch reads AMKSSPQIPHKTYSSILKHLN.

This sequence belongs to the protein kinase superfamily. CMGC Ser/Thr protein kinase family. MAP kinase subfamily. Heterodimer with ERK4/MAPK4. Interacts with (via FRIEDE motif) MAPKAPK5. Interacts with UBE3A; this interaction may be indirect and mediated by HERC2, possibly via HERC2 interaction with NEURL4. Mg(2+) is required as a cofactor. In terms of processing, phosphorylated at Ser-189 by PAK1, PAK2 and PAK3 resulting in catalytic activation. Phosphorylated by MAPKAPK5 at other sites. Ubiquitination at Met-1 leads to degradation by the proteasome pathway.

It localises to the cytoplasm. It is found in the nucleus. It catalyses the reaction L-seryl-[protein] + ATP = O-phospho-L-seryl-[protein] + ADP + H(+). It carries out the reaction L-threonyl-[protein] + ATP = O-phospho-L-threonyl-[protein] + ADP + H(+). Its activity is regulated as follows. Activated by phosphorylation at Ser-189. Atypical MAPK protein. Phosphorylates microtubule-associated protein 2 (MAP2) and MAPKAPK5. The precise role of the complex formed with MAPKAPK5 is still unclear, but the complex follows a complex set of phosphorylation events: upon interaction with atypical MAPKAPK5, ERK3/MAPK6 is phosphorylated at Ser-189 and then mediates phosphorylation and activation of MAPKAPK5, which in turn phosphorylates ERK3/MAPK6. May promote entry in the cell cycle. The sequence is that of Mitogen-activated protein kinase 6 (Mapk6) from Mus musculus (Mouse).